Consider the following 293-residue polypeptide: Movement protein BC1 (293 aa).

It belongs to the begomovirus movement protein BC1 family. Binds to dimeric supercoiled plasmid DNA. Phosphorylated.

It is found in the host cell membrane. The protein resides in the host microsome membrane. Its subcellular location is the host endoplasmic reticulum membrane. Transports viral genome to neighboring plant cells directly through plasmosdesmata, without any budding. The movement protein allows efficient cell to cell propagation, by bypassing the host cell wall barrier. Begomovirus genome is shuttled out of nucleus by Nuclear shuttle protein (NSP) and the movement protein transports the DNA-NSP complex to cell plasmodesmata and facilitates further movement across the cell wall. The chain is Movement protein BC1 from Potato yellow mosaic virus (isolate Venezuela) (PYMV).